The primary structure comprises 596 residues: Elongation factor 4 (596 aa).

One can recognise a tr-type G domain in the interval 2 to 184 (KHIRNFSIIA…EIIAKIPPPV (183 aa)). Residues 14–19 (DHGKST) and 131–134 (NKID) each bind GTP.

This sequence belongs to the TRAFAC class translation factor GTPase superfamily. Classic translation factor GTPase family. LepA subfamily.

The protein localises to the cell inner membrane. It catalyses the reaction GTP + H2O = GDP + phosphate + H(+). Required for accurate and efficient protein synthesis under certain stress conditions. May act as a fidelity factor of the translation reaction, by catalyzing a one-codon backward translocation of tRNAs on improperly translocated ribosomes. Back-translocation proceeds from a post-translocation (POST) complex to a pre-translocation (PRE) complex, thus giving elongation factor G a second chance to translocate the tRNAs correctly. Binds to ribosomes in a GTP-dependent manner. This Shewanella frigidimarina (strain NCIMB 400) protein is Elongation factor 4.